We begin with the raw amino-acid sequence, 182 residues long: Ribosome maturation factor RimM (182 aa).

Residues 103 to 182 enclose the PRC barrel domain; it reads EDEFYWRELF…RIEVDWDPGF (80 aa).

The protein belongs to the RimM family. In terms of assembly, binds ribosomal protein uS19.

The protein localises to the cytoplasm. Functionally, an accessory protein needed during the final step in the assembly of 30S ribosomal subunit, possibly for assembly of the head region. Essential for efficient processing of 16S rRNA. May be needed both before and after RbfA during the maturation of 16S rRNA. It has affinity for free ribosomal 30S subunits but not for 70S ribosomes. The chain is Ribosome maturation factor RimM from Vibrio campbellii (strain ATCC BAA-1116).